Here is a 299-residue protein sequence, read N- to C-terminus: ATP phosphoribosyltransferase (299 aa).

It belongs to the ATP phosphoribosyltransferase family. Long subfamily. As to quaternary structure, equilibrium between an active dimeric form, an inactive hexameric form and higher aggregates. Interconversion between the various forms is largely reversible and is influenced by the natural substrates and inhibitors of the enzyme. Mg(2+) is required as a cofactor.

The protein resides in the cytoplasm. The enzyme catalyses 1-(5-phospho-beta-D-ribosyl)-ATP + diphosphate = 5-phospho-alpha-D-ribose 1-diphosphate + ATP. The protein operates within amino-acid biosynthesis; L-histidine biosynthesis; L-histidine from 5-phospho-alpha-D-ribose 1-diphosphate: step 1/9. Its activity is regulated as follows. Feedback inhibited by histidine. In terms of biological role, catalyzes the condensation of ATP and 5-phosphoribose 1-diphosphate to form N'-(5'-phosphoribosyl)-ATP (PR-ATP). Has a crucial role in the pathway because the rate of histidine biosynthesis seems to be controlled primarily by regulation of HisG enzymatic activity. The chain is ATP phosphoribosyltransferase from Escherichia coli O8 (strain IAI1).